A 431-amino-acid polypeptide reads, in one-letter code: tRNA(Ile)-lysidine synthase (431 aa).

Residue 19-24 (STGIDS) coordinates ATP.

This sequence belongs to the tRNA(Ile)-lysidine synthase family.

Its subcellular location is the cytoplasm. The catalysed reaction is cytidine(34) in tRNA(Ile2) + L-lysine + ATP = lysidine(34) in tRNA(Ile2) + AMP + diphosphate + H(+). In terms of biological role, ligates lysine onto the cytidine present at position 34 of the AUA codon-specific tRNA(Ile) that contains the anticodon CAU, in an ATP-dependent manner. Cytidine is converted to lysidine, thus changing the amino acid specificity of the tRNA from methionine to isoleucine. The polypeptide is tRNA(Ile)-lysidine synthase (Staphylococcus aureus (strain MRSA252)).